The following is a 632-amino-acid chain: Extracellular metalloproteinase 2 (632 aa).

The signal sequence occupies residues 1 to 19 (MHGLLLAGLAAALPLGVAG). Residues 20-244 (LPARQQSGLS…VHNVVDYVAS (225 aa)) constitute a propeptide that is removed on maturation. Asn270 carries N-linked (GlcNAc...) asparagine glycosylation. Zn(2+) is bound at residue His429. Glu430 is an active-site residue. His433 serves as a coordination point for Zn(2+).

The protein belongs to the peptidase M36 family. The cofactor is Zn(2+).

The protein localises to the secreted. Functionally, secreted metalloproteinase probably acting as a virulence factor. The chain is Extracellular metalloproteinase 2 (MEP2) from Trichophyton tonsurans (Scalp ringworm fungus).